Consider the following 313-residue polypeptide: Ribosomal protein L11 methyltransferase (313 aa).

The S-adenosyl-L-methionine site is built by threonine 161, glycine 182, aspartate 204, and asparagine 246.

It belongs to the methyltransferase superfamily. PrmA family.

The protein resides in the cytoplasm. The enzyme catalyses L-lysyl-[protein] + 3 S-adenosyl-L-methionine = N(6),N(6),N(6)-trimethyl-L-lysyl-[protein] + 3 S-adenosyl-L-homocysteine + 3 H(+). Functionally, methylates ribosomal protein L11. The polypeptide is Ribosomal protein L11 methyltransferase (Acetivibrio thermocellus (strain ATCC 27405 / DSM 1237 / JCM 9322 / NBRC 103400 / NCIMB 10682 / NRRL B-4536 / VPI 7372) (Clostridium thermocellum)).